The sequence spans 133 residues: Fatty acid-binding protein (133 aa).

The protein belongs to the calycin superfamily. Fatty-acid binding protein (FABP) family.

This Clonorchis sinensis (Chinese liver fluke) protein is Fatty acid-binding protein.